Here is a 1428-residue protein sequence, read N- to C-terminus: DNA topoisomerase 2 (1428 aa).

Residues N70, N99, S127–N129, and G140–K147 each bind ATP. The tract at residues K333–K336 is interaction with DNA. Residue Q365–K367 participates in ATP binding. The region spanning C443 to L557 is the Toprim domain. Positions 449, 526, and 528 each coordinate Mg(2+). Residues I692–L1159 form the Topo IIA-type catalytic domain. Y782 acts as the O-(5'-phospho-DNA)-tyrosine intermediate in catalysis. The interaction with DNA stretch occupies residues K965–N974. Disordered regions lie at residues K1083–V1102, A1176–K1217, K1240–K1288, and M1303–D1428. T1086 carries the phosphothreonine; by CK2 modification. S1087 is subject to Phosphoserine; by CK2. Positions K1207 to K1217 are enriched in basic residues. The residue at position 1252 (S1252) is a Phosphoserine. T1258 carries the post-translational modification Phosphothreonine; by CK2. Phosphoserine; by CK2 occurs at positions 1266, 1269, and 1272. The segment covering D1275–L1286 has biased composition (basic and acidic residues). Positions T1332–Q1347 are enriched in basic residues. 4 positions are modified to phosphoserine; by CK2: S1353, S1356, S1408, and S1423. Acidic residues predominate over residues E1403 to D1428.

This sequence belongs to the type II topoisomerase family. In terms of assembly, homodimer. Mg(2+) is required as a cofactor. It depends on Mn(2+) as a cofactor. Ca(2+) serves as cofactor. In terms of processing, phosphorylation enhances the activity. Stimulates decatenation activity.

It is found in the nucleus. It catalyses the reaction ATP-dependent breakage, passage and rejoining of double-stranded DNA.. Control of topological states of DNA by transient breakage and subsequent rejoining of DNA strands. Topoisomerase II makes double-strand breaks. Essential during mitosis and meiosis for proper segregation of daughter chromosomes. The chain is DNA topoisomerase 2 (TOP2) from Saccharomyces cerevisiae (strain ATCC 204508 / S288c) (Baker's yeast).